Consider the following 526-residue polypeptide: Bifunctional purine biosynthesis protein PurH (526 aa).

Positions 1 to 147 (MSSIKRALIS…KNWKHVAIVT (147 aa)) constitute an MGS-like domain.

It belongs to the PurH family.

The enzyme catalyses (6R)-10-formyltetrahydrofolate + 5-amino-1-(5-phospho-beta-D-ribosyl)imidazole-4-carboxamide = 5-formamido-1-(5-phospho-D-ribosyl)imidazole-4-carboxamide + (6S)-5,6,7,8-tetrahydrofolate. The catalysed reaction is IMP + H2O = 5-formamido-1-(5-phospho-D-ribosyl)imidazole-4-carboxamide. It functions in the pathway purine metabolism; IMP biosynthesis via de novo pathway; 5-formamido-1-(5-phospho-D-ribosyl)imidazole-4-carboxamide from 5-amino-1-(5-phospho-D-ribosyl)imidazole-4-carboxamide (10-formyl THF route): step 1/1. Its pathway is purine metabolism; IMP biosynthesis via de novo pathway; IMP from 5-formamido-1-(5-phospho-D-ribosyl)imidazole-4-carboxamide: step 1/1. This Neisseria meningitidis serogroup B (strain ATCC BAA-335 / MC58) protein is Bifunctional purine biosynthesis protein PurH.